Here is a 182-residue protein sequence, read N- to C-terminus: Peptidyl-tRNA hydrolase (182 aa).

Residue Y14 coordinates tRNA. H19 serves as the catalytic Proton acceptor. TRNA is bound by residues F64, N66, and N112.

The protein belongs to the PTH family. As to quaternary structure, monomer.

Its subcellular location is the cytoplasm. It catalyses the reaction an N-acyl-L-alpha-aminoacyl-tRNA + H2O = an N-acyl-L-amino acid + a tRNA + H(+). In terms of biological role, hydrolyzes ribosome-free peptidyl-tRNAs (with 1 or more amino acids incorporated), which drop off the ribosome during protein synthesis, or as a result of ribosome stalling. Its function is as follows. Catalyzes the release of premature peptidyl moieties from peptidyl-tRNA molecules trapped in stalled 50S ribosomal subunits, and thus maintains levels of free tRNAs and 50S ribosomes. The chain is Peptidyl-tRNA hydrolase from Wolbachia sp. subsp. Drosophila simulans (strain wRi).